Here is a 587-residue protein sequence, read N- to C-terminus: Phosphatidylinositol-3-phosphatase SAC1 (587 aa).

Over 1–520 (MATAAYEQLK…SPLSVPRDWK (520 aa)) the chain is Cytoplasmic. Residues 122 to 451 (LNHVLNVDGF…ANACAKQYAG (330 aa)) enclose the SAC domain. The interval 452–587 (TGALKTDFTR…PRLVQKEKID (136 aa)) is essential for phosphatidylinositol-4-phosphate phosphatase activity. Position 456 is an N6-acetyllysine (K456). The helical transmembrane segment at 521-541 (FLALPIIMVVAFSMCIICLLM) threads the bilayer. Topologically, residues 542-548 (AGDTWTE) are lumenal. Residues 549 to 569 (TLAYVLFWGVASIGTFFIILY) traverse the membrane as a helical segment. At 570–587 (NGKDFVDAPRLVQKEKID) the chain is on the cytoplasmic side.

As to quaternary structure, interacts with TMEM39A. Interacts with SEC23A and SEC24A; this interaction is reduced in the absence of TMEM39A. Interacts with PLEKHA3 and VAPA and/or VAPB to form a ternary complex.

The protein localises to the endoplasmic reticulum membrane. The protein resides in the golgi apparatus membrane. It catalyses the reaction a 1,2-diacyl-sn-glycero-3-phospho-(1D-myo-inositol-3-phosphate) + H2O = a 1,2-diacyl-sn-glycero-3-phospho-(1D-myo-inositol) + phosphate. The enzyme catalyses a 1,2-diacyl-sn-glycero-3-phospho-(1D-myo-inositol 4-phosphate) + H2O = a 1,2-diacyl-sn-glycero-3-phospho-(1D-myo-inositol) + phosphate. Phosphoinositide phosphatase which catalyzes the hydrolysis of phosphatidylinositol 4-phosphate (PtdIns(4)P), phosphatidylinositol 3-phosphate (PtdIns(3)P) and has low activity towards phosphatidylinositol-3,5-bisphosphate (PtdIns(3,5)P2). Shows a very robust PtdIns(4)P phosphatase activity when it binds PtdIns(4)P in a 'cis' configuration in the cellular environment, with much less activity seen when it binds PtdIns(4)P in 'trans' configuration. PtdIns(4)P phosphatase activity (when it binds PtdIns(4)P in 'trans' configuration) is enhanced in the presence of PLEKHA3. This chain is Phosphatidylinositol-3-phosphatase SAC1 (SACM1L), found in Pongo abelii (Sumatran orangutan).